A 198-amino-acid chain; its full sequence is dITP/XTP pyrophosphatase (198 aa).

Position 10–15 (10–15) interacts with substrate; the sequence is SGSDHK. Residues glutamate 43 and aspartate 72 each coordinate Mg(2+). Residue aspartate 72 is the Proton acceptor of the active site. Substrate is bound by residues serine 73, 154–157, lysine 177, and 182–183; these read FGYD and HR.

This sequence belongs to the HAM1 NTPase family. As to quaternary structure, homodimer. The cofactor is Mg(2+).

The catalysed reaction is XTP + H2O = XMP + diphosphate + H(+). The enzyme catalyses dITP + H2O = dIMP + diphosphate + H(+). It catalyses the reaction ITP + H2O = IMP + diphosphate + H(+). Functionally, pyrophosphatase that catalyzes the hydrolysis of nucleoside triphosphates to their monophosphate derivatives, with a high preference for the non-canonical purine nucleotides XTP (xanthosine triphosphate), dITP (deoxyinosine triphosphate) and ITP. Seems to function as a house-cleaning enzyme that removes non-canonical purine nucleotides from the nucleotide pool, thus preventing their incorporation into DNA/RNA and avoiding chromosomal lesions. In Leptospira biflexa serovar Patoc (strain Patoc 1 / Ames), this protein is dITP/XTP pyrophosphatase.